A 181-amino-acid polypeptide reads, in one-letter code: uncharacterized protein (181 aa).

A helical transmembrane segment spans residues 133 to 153; that stretch reads MCVCVHVCACVYVCMCVLVCM.

The protein resides in the membrane. This is an uncharacterized protein from Homo sapiens (Human).